The chain runs to 303 residues: N-acetyl-D-glucosamine kinase (303 aa).

Residues 4 to 11 (GFDIGGTK) and 133 to 140 (GVGGGLVL) each bind ATP. The Zn(2+) site is built by His-157, Cys-177, Cys-179, and Cys-184.

This sequence belongs to the ROK (NagC/XylR) family. NagK subfamily.

The enzyme catalyses N-acetyl-D-glucosamine + ATP = N-acetyl-D-glucosamine 6-phosphate + ADP + H(+). Its pathway is cell wall biogenesis; peptidoglycan recycling. Its function is as follows. Catalyzes the phosphorylation of N-acetyl-D-glucosamine (GlcNAc) derived from cell-wall degradation, yielding GlcNAc-6-P. In Salmonella agona (strain SL483), this protein is N-acetyl-D-glucosamine kinase.